We begin with the raw amino-acid sequence, 326 residues long: 3-methyl-2-oxobutanoate hydroxymethyltransferase 1 (326 aa).

Mg(2+) is bound by residues aspartate 52, aspartate 91, and glutamate 122. 3-methyl-2-oxobutanoate-binding positions include aspartate 52–serine 53 and aspartate 91. Residue glutamate 189 is the Proton acceptor of the active site.

This sequence belongs to the PanB family. Homodecamer; pentamer of dimers. The cofactor is Mg(2+).

The protein localises to the cytoplasm. The enzyme catalyses 3-methyl-2-oxobutanoate + (6R)-5,10-methylene-5,6,7,8-tetrahydrofolate + H2O = 2-dehydropantoate + (6S)-5,6,7,8-tetrahydrofolate. The protein operates within cofactor biosynthesis; (R)-pantothenate biosynthesis; (R)-pantoate from 3-methyl-2-oxobutanoate: step 1/2. Its function is as follows. Catalyzes the reversible reaction in which hydroxymethyl group from 5,10-methylenetetrahydrofolate is transferred onto alpha-ketoisovalerate to form ketopantoate. The polypeptide is 3-methyl-2-oxobutanoate hydroxymethyltransferase 1 (Bradyrhizobium diazoefficiens (strain JCM 10833 / BCRC 13528 / IAM 13628 / NBRC 14792 / USDA 110)).